The sequence spans 168 residues: Cyclic pyranopterin monophosphate synthase (168 aa).

Residues 81–83 (LCH) and 117–118 (ME) each bind substrate. Asp-132 is an active-site residue.

It belongs to the MoaC family. As to quaternary structure, homohexamer; trimer of dimers.

The catalysed reaction is (8S)-3',8-cyclo-7,8-dihydroguanosine 5'-triphosphate = cyclic pyranopterin phosphate + diphosphate. The protein operates within cofactor biosynthesis; molybdopterin biosynthesis. Its function is as follows. Catalyzes the conversion of (8S)-3',8-cyclo-7,8-dihydroguanosine 5'-triphosphate to cyclic pyranopterin monophosphate (cPMP). In Deinococcus radiodurans (strain ATCC 13939 / DSM 20539 / JCM 16871 / CCUG 27074 / LMG 4051 / NBRC 15346 / NCIMB 9279 / VKM B-1422 / R1), this protein is Cyclic pyranopterin monophosphate synthase.